The sequence spans 336 residues: Torsin-1B (336 aa).

A signal peptide spans methionine 1–alanine 24. The N-linked (GlcNAc...) asparagine glycan is linked to asparagine 64. Glycine 109–asparagine 116 serves as a coordination point for ATP. N-linked (GlcNAc...) asparagine glycosylation is present at asparagine 165.

The protein belongs to the ClpA/ClpB family. Torsin subfamily. Homohexamer. Interacts with TOR1A; the interaction may be specific of neural tissues. Interacts with TOR1AIP1; TOR1AIP1 is required for TOR1B location on the nuclear membrane. Interacts (ATP-bound) with TOR1AIP2; important for endoplasmic reticulum integrity. In terms of processing, N-glycosylated. As to expression, highly expressed in liver and muscle; lower expression levels are observed in brain (at protein level).

The protein localises to the endoplasmic reticulum lumen. It localises to the nucleus membrane. The enzyme catalyses ATP + H2O = ADP + phosphate + H(+). Functionally, may serve as a molecular chaperone assisting in the proper folding of secreted and/or membrane proteins. Plays a role in non-neural cells nuclear envelope and endoplasmic reticulum integrity. May have a redundant function with TOR1A in non-neural tissues. The polypeptide is Torsin-1B (Tor1b) (Mus musculus (Mouse)).